The primary structure comprises 206 residues: Protein Nef (206 aa).

Residue glycine 2 is the site of N-myristoyl glycine; by host attachment. Serine 6 is subject to Phosphoserine; by host. Residues 62–65 (EEEK) form an acidic; interacts with host PACS1 and PACS2; stabilizes the interaction of NEF/MHC-I with host AP1M1; necessary for MHC-I internalization region. The segment at 69–78 (PVTPQVPLRP) is SH3-binding; interaction with Src family tyrosine kinases. Residues 72-75 (PQVP) carry the PxxP; stabilizes the interaction of NEF/MHC-I with host AP1M1; necessary for MHC-I internalization motif. The segment at 108-124 (DILDLWIYHTQGYFPDW) is mediates dimerization, Nef-PTE1 interaction. The binding to ATP6V1H stretch occupies residues 148–180 (VEPEKLEEANKGENTSLLHPVSLHGMDDPEREV). The Dileucine internalization motif; necessary for CD4 internalization signature appears at 164–165 (LL). A Diacidic; necessary for CD4 internalization motif is present at residues 174-175 (DD).

It belongs to the lentivirus primate group Nef protein family. In terms of assembly, monomer; cytosolic form. Homodimer; membrane bound form. Interacts with Nef associated p21-activated kinase (PAK2); this interaction activates PAK2. Associates with the Nef-MHC-I-AP1 complex; this complex is required for MHC-I internalization. Interacts (via C-terminus) with host PI3-kinase. Interacts with host PACS1; this interaction seems to be weak. Interacts with host PACS2. Interacts with host LCK and MAPK3; these interactions inhibit the kinase activity of the latter. Interacts with host ATP6V1H; this interaction may play a role in CD4 endocytosis. Associates with the CD4-Nef-AP2 complex; this complex is required for CD4 internalization. Interacts with host AP2 subunit alpha and AP2 subunit sigma2. Interacts with TCR-zeta chain; this interaction up-regulates the Fas ligand (FasL) surface expression. Interacts with host HCK, LYN, and SRC; these interactions activate the Src family kinases. Interacts with MAP3K5; this interaction inhibits the Fas and TNFR-mediated death signals. Interacts with beta-COP and PTE1. Interacts with human RACK1; this increases Nef phosphorylation by PKC. Interacts with TP53; this interaction decreases the half-life of TP53, protecting the infected cell against p53-mediated apoptosis. The virion-associated Nef proteins are cleaved by the viral protease to release the soluble C-terminal core protein. Nef is probably cleaved concomitantly with viral structural proteins on maturation of virus particles. In terms of processing, myristoylated. Post-translationally, phosphorylated on serine residues, probably by host PKCdelta and theta.

It localises to the host cell membrane. The protein resides in the virion. Its subcellular location is the secreted. The protein localises to the host Golgi apparatus membrane. Factor of infectivity and pathogenicity, required for optimal virus replication. Alters numerous pathways of T-lymphocyte function and down-regulates immunity surface molecules in order to evade host defense and increase viral infectivity. Alters the functionality of other immunity cells, like dendritic cells, monocytes/macrophages and NK cells. In terms of biological role, in infected CD4(+) T-lymphocytes, down-regulates the surface MHC-I, mature MHC-II, CD4, CD28, CCR5 and CXCR4 molecules. Mediates internalization and degradation of host CD4 through the interaction of with the cytoplasmic tail of CD4, the recruitment of AP-2 (clathrin adapter protein complex 2), internalization through clathrin coated pits, and subsequent transport to endosomes and lysosomes for degradation. Diverts host MHC-I molecules to the trans-Golgi network-associated endosomal compartments by an endocytic pathway to finally target them for degradation. MHC-I down-regulation may involve AP-1 (clathrin adapter protein complex 1) or possibly Src family kinase-ZAP70/Syk-PI3K cascade recruited by PACS2. In consequence infected cells are masked for immune recognition by cytotoxic T-lymphocytes. Decreasing the number of immune receptors also prevents reinfection by more HIV particles (superinfection). Down-regulates host SERINC3 and SERINC5 thereby excluding these proteins from the viral particles. Virion infectivity is drastically higher when SERINC3 or SERINC5 are excluded from the viral envelope, because these host antiviral proteins impair the membrane fusion event necessary for subsequent virion penetration. Its function is as follows. Bypasses host T-cell signaling by inducing a transcriptional program nearly identical to that of anti-CD3 cell activation. Interaction with TCR-zeta chain up-regulates the Fas ligand (FasL). Increasing surface FasL molecules and decreasing surface MHC-I molecules on infected CD4(+) cells send attacking cytotoxic CD8+ T-lymphocytes into apoptosis. Functionally, plays a role in optimizing the host cell environment for viral replication without causing cell death by apoptosis. Protects the infected cells from apoptosis in order to keep them alive until the next virus generation is ready to strike. Inhibits the Fas and TNFR-mediated death signals by blocking MAP3K5/ASK1. Decreases the half-life of TP53, protecting the infected cell against p53-mediated apoptosis. Inhibits the apoptotic signals regulated by the Bcl-2 family proteins through the formation of a Nef/PI3-kinase/PAK2 complex that leads to activation of PAK2 and induces phosphorylation of host BAD. Extracellular Nef protein targets CD4(+) T-lymphocytes for apoptosis by interacting with CXCR4 surface receptors. This chain is Protein Nef, found in Homo sapiens (Human).